Consider the following 216-residue polypeptide: Small ribosomal subunit protein uS3c (216 aa).

Residues 43-116 (IKNYVQKNMR…RLNIAITRVA (74 aa)) enclose the KH type-2 domain.

The protein belongs to the universal ribosomal protein uS3 family. Part of the 30S ribosomal subunit.

It is found in the plastid. It localises to the chloroplast. The sequence is that of Small ribosomal subunit protein uS3c (rps3) from Drimys granadensis.